A 397-amino-acid polypeptide reads, in one-letter code: LIM/homeobox protein Lhx3 (397 aa).

LIM zinc-binding domains are found at residues 31–81 (CAGC…CKDD) and 90–144 (CAAC…CKAD). At Thr-63 the chain carries Phosphothreonine. Ser-71 carries the phosphoserine modification. A DNA-binding region (homeobox) is located at residues 157–216 (AKRPRTTITAKQLETLKSAYNTSPKPARHVREQLSSETGLDMRVVQVWFQNRRAKEKRLK). Residues 212 to 397 (EKRLKKDAGR…WLDEVDHAQF (186 aa)) form a disordered region. Phosphotyrosine is present on Tyr-227. 2 positions are modified to phosphoserine: Ser-234 and Ser-238. The span at 316–331 (GVPPSPAAPQSLPGPQ) shows a compositional bias: pro residues.

As to quaternary structure, interacts with POU1F1. At neuronal promoters, interacts with LDB1, in motor neurons LDB1 is displaced by ISL1 and a ternary complex is formed in which ISL1 contacts both LHX3 and LDB1; allosteric structural changes in the DNA binding domain of LHX3, induced by the ISL1-LHX3 interaction, may explain differences in sequence specificity of the different complexes. Interacts with LDB2. May interact with CITED2/MRG1.

The protein localises to the nucleus. Functionally, transcription factor. Recognizes and binds to the consensus sequence motif 5'-AATTAATTA-3' in the regulatory elements of target genes, such as glycoprotein hormones alpha chain CGA and visual system homeobox CHX10, positively modulating transcription; transcription can be co-activated by LDB2. Synergistically enhances transcription from the prolactin promoter in cooperation with POU1F1/Pit-1. Required for the establishment of the specialized cells of the pituitary gland and the nervous system. Involved in the development of interneurons and motor neurons in cooperation with LDB1 and ISL1. The sequence is that of LIM/homeobox protein Lhx3 (LHX3) from Homo sapiens (Human).